We begin with the raw amino-acid sequence, 141 residues long: Nucleoside diphosphate kinase (141 aa).

The ATP site is built by Lys-11, Phe-59, Arg-87, Thr-93, Arg-104, and Asn-114. The Pros-phosphohistidine intermediate role is filled by His-117.

This sequence belongs to the NDK family. As to quaternary structure, homotetramer. It depends on Mg(2+) as a cofactor.

It localises to the cytoplasm. It carries out the reaction a 2'-deoxyribonucleoside 5'-diphosphate + ATP = a 2'-deoxyribonucleoside 5'-triphosphate + ADP. It catalyses the reaction a ribonucleoside 5'-diphosphate + ATP = a ribonucleoside 5'-triphosphate + ADP. Major role in the synthesis of nucleoside triphosphates other than ATP. The ATP gamma phosphate is transferred to the NDP beta phosphate via a ping-pong mechanism, using a phosphorylated active-site intermediate. This Mannheimia succiniciproducens (strain KCTC 0769BP / MBEL55E) protein is Nucleoside diphosphate kinase.